The sequence spans 230 residues: Fibrillarin-like rRNA/tRNA 2'-O-methyltransferase (230 aa).

Residues 87–88 (TT), 105–106 (EY), 130–131 (DA), and 150–153 (DVAQ) each bind S-adenosyl-L-methionine.

Interacts with nop5. Component of box C/D small ribonucleoprotein (sRNP) particles that contain rpl7ae, FlpA and nop5, plus a guide RNA.

Involved in pre-rRNA and tRNA processing. Utilizes the methyl donor S-adenosyl-L-methionine to catalyze the site-specific 2'-hydroxyl methylation of ribose moieties in rRNA and tRNA. Site specificity is provided by a guide RNA that base pairs with the substrate. Methylation occurs at a characteristic distance from the sequence involved in base pairing with the guide RNA. This is Fibrillarin-like rRNA/tRNA 2'-O-methyltransferase from Methanocaldococcus jannaschii (strain ATCC 43067 / DSM 2661 / JAL-1 / JCM 10045 / NBRC 100440) (Methanococcus jannaschii).